The chain runs to 172 residues: Adenine phosphoribosyltransferase (172 aa).

Belongs to the purine/pyrimidine phosphoribosyltransferase family. In terms of assembly, homodimer.

It localises to the cytoplasm. The enzyme catalyses AMP + diphosphate = 5-phospho-alpha-D-ribose 1-diphosphate + adenine. Its pathway is purine metabolism; AMP biosynthesis via salvage pathway; AMP from adenine: step 1/1. Its function is as follows. Catalyzes a salvage reaction resulting in the formation of AMP, that is energically less costly than de novo synthesis. The protein is Adenine phosphoribosyltransferase of Streptococcus pyogenes serotype M5 (strain Manfredo).